Here is a 603-residue protein sequence, read N- to C-terminus: Phosphoenolpyruvate carboxykinase [GTP] (603 aa).

Residues Arg-87 and 209–211 contribute to the substrate site; that span reads YAG. Residues Lys-218 and His-237 each contribute to the Mn(2+) site. Ser-258 lines the substrate pocket. 259 to 264 serves as a coordination point for GTP; that stretch reads GSGKTS. Ser-260 is an active-site residue. Mn(2+) is bound at residue Asp-275. 365-367 contributes to the substrate binding site; it reads NAR. Residues Arg-367 and Arg-398 each contribute to the GTP site.

It belongs to the phosphoenolpyruvate carboxykinase [GTP] family. It depends on Mn(2+) as a cofactor.

The protein localises to the cytoplasm. The catalysed reaction is oxaloacetate + GTP = phosphoenolpyruvate + GDP + CO2. The protein operates within carbohydrate biosynthesis; gluconeogenesis. Functionally, catalyzes the conversion of oxaloacetate (OAA) to phosphoenolpyruvate (PEP), the rate-limiting step in the metabolic pathway that produces glucose from lactate and other precursors derived from the citric acid cycle. The polypeptide is Phosphoenolpyruvate carboxykinase [GTP] (Saccharolobus solfataricus (strain ATCC 35092 / DSM 1617 / JCM 11322 / P2) (Sulfolobus solfataricus)).